Reading from the N-terminus, the 314-residue chain is MAATASPGAGRMDGKPRTSPKSVKFLFGGLAGMGATVFVQPLDLVKNRMQLSGEGAKTREYKTSFHALTSILKTEGLKGIYTGLSAGLLRQATYTTTRLGIYTVLFERLTGADGTPPGFLLKALIGMTAGATGAFVGTPAEVALIRMTADGRLPADQRRGYKNVFNALVRIAREEGVPTLWRGCIPTMARAVVVNAAQLASYSQSKQFLLDSGYFSDNILCHFCASMISGLVTTAASMPVDIVKTRIQNMRMIDGKPEYKNGLDVLLKVVRYEGFFSLWKGFTPYYARLGPHTVLTFIFLEQMNKAYKRLFLSG.

Alanine 2 is subject to N-acetylalanine. Position 6 is a phosphoserine (serine 6). Solcar repeat units lie at residues 23–108 (VKFL…LFER), 117–208 (PGFL…SKQF), and 217–306 (DNIL…MNKA). A helical transmembrane segment spans residues 24–42 (KFLFGGLAGMGATVFVQPL). At lysine 57 the chain carries N6-succinyllysine. At lysine 73 the chain carries N6-acetyllysine. The chain crosses the membrane as a helical span at residues 83–101 (GLSAGLLRQATYTTTRLGI). Tyrosine 102 carries the post-translational modification Phosphotyrosine. 3 helical membrane-spanning segments follow: residues 119–140 (FLLK…GTPA), 183–202 (GCIP…LASY), and 222–240 (HFCA…SMPV). Lysine 256 is subject to N6-acetyllysine. Residues 281–300 (GFTPYYARLGPHTVLTFIFL) form a helical membrane-spanning segment.

It belongs to the mitochondrial carrier (TC 2.A.29) family. As to quaternary structure, interacts with SMIM26.

The protein resides in the mitochondrion inner membrane. The catalysed reaction is (S)-malate(in) + 2-oxoglutarate(out) = (S)-malate(out) + 2-oxoglutarate(in). It catalyses the reaction malonate(in) + 2-oxoglutarate(out) = malonate(out) + 2-oxoglutarate(in). The enzyme catalyses succinate(in) + 2-oxoglutarate(out) = succinate(out) + 2-oxoglutarate(in). It carries out the reaction maleate(in) + 2-oxoglutarate(out) = maleate(out) + 2-oxoglutarate(in). The catalysed reaction is oxaloacetate(in) + 2-oxoglutarate(out) = oxaloacetate(out) + 2-oxoglutarate(in). Catalyzes the transport of 2-oxoglutarate (alpha-oxoglutarate) across the inner mitochondrial membrane in an electroneutral exchange for malate. Can also exchange 2-oxoglutarate for other dicarboxylic acids such as malonate, succinate, maleate and oxaloacetate, although with lower affinity. Contributes to several metabolic processes, including the malate-aspartate shuttle, the oxoglutarate/isocitrate shuttle, in gluconeogenesis from lactate, and in nitrogen metabolism. Maintains mitochondrial fusion and fission events, and the organization and morphology of cristae. Involved in the regulation of apoptosis. Helps protect from cytotoxic-induced apoptosis by modulating glutathione levels in mitochondria. The chain is Mitochondrial 2-oxoglutarate/malate carrier protein (Slc25a11) from Mus musculus (Mouse).